The chain runs to 619 residues: ATP-dependent zinc metalloprotease FtsH 1 (619 aa).

Residues 1-8 are Cytoplasmic-facing; sequence MADEKRPA. A helical membrane pass occupies residues 9-29; the sequence is SRAWLGYLLIAVGILVLSGIV. The Periplasmic segment spans residues 30–108; it reads RSRGRPLVPY…RIEAKSPQTS (79 aa). The chain crosses the membrane as a helical span at residues 109–129; it reads VWMQVAIWMLPLVLINAAFFM. Residues 130–619 lie on the Cytoplasmic side of the membrane; it reads MLRRAGQGAG…KIAVGPPSAA (490 aa). Residue 203–210 participates in ATP binding; that stretch reads GPPGTGKT. His426 contributes to the Zn(2+) binding site. Glu427 is an active-site residue. 2 residues coordinate Zn(2+): His430 and Asp503.

In the central section; belongs to the AAA ATPase family. It in the C-terminal section; belongs to the peptidase M41 family. As to quaternary structure, homohexamer. Requires Zn(2+) as cofactor.

Its subcellular location is the cell inner membrane. Its function is as follows. Acts as a processive, ATP-dependent zinc metallopeptidase for both cytoplasmic and membrane proteins. Plays a role in the quality control of integral membrane proteins. This Sorangium cellulosum (strain So ce56) (Polyangium cellulosum (strain So ce56)) protein is ATP-dependent zinc metalloprotease FtsH 1.